Consider the following 58-residue polypeptide: Parvalbumin beta 3 (58 aa).

Position 1 is an N-acetylalanine (Ala-1). In terms of domain architecture, EF-hand spans Phe-24–Lys-58. Residues Asp-37, Asp-39, Ser-41, Phe-43, Glu-45, and Glu-48 each contribute to the Ca(2+) site.

The protein belongs to the parvalbumin family.

In terms of biological role, in muscle, parvalbumin is thought to be involved in relaxation after contraction. It binds two calcium ions. The polypeptide is Parvalbumin beta 3 (Merluccius senegalensis (Senegalese hake)).